Reading from the N-terminus, the 137-residue chain is Small ribosomal subunit protein uS12 (137 aa).

A compositionally biased stretch (polar residues) spans 31 to 41 (MSRKQTNNTAP). The disordered stretch occupies residues 31-57 (MSRKQTNNTAPQKRGVATRVGTMTPKK). Residue aspartate 102 is modified to 3-methylthioaspartic acid.

The protein belongs to the universal ribosomal protein uS12 family. Part of the 30S ribosomal subunit. Contacts proteins S8 and S17. May interact with IF1 in the 30S initiation complex.

Functionally, with S4 and S5 plays an important role in translational accuracy. Interacts with and stabilizes bases of the 16S rRNA that are involved in tRNA selection in the A site and with the mRNA backbone. Located at the interface of the 30S and 50S subunits, it traverses the body of the 30S subunit contacting proteins on the other side and probably holding the rRNA structure together. The combined cluster of proteins S8, S12 and S17 appears to hold together the shoulder and platform of the 30S subunit. The chain is Small ribosomal subunit protein uS12 from Oenococcus oeni (strain ATCC BAA-331 / PSU-1).